The following is a 182-amino-acid chain: Transcription termination/antitermination protein NusG (182 aa).

The KOW domain occupies 130-161 (VGEVVRVNEGPFADFNGTVEEVDYEKSRLKVS).

This sequence belongs to the NusG family.

Participates in transcription elongation, termination and antitermination. The chain is Transcription termination/antitermination protein NusG from Vibrio vulnificus (strain CMCP6).